Consider the following 421-residue polypeptide: Outer capsid protein P8 (421 aa).

The protein belongs to the phytoreovirus outer capsid protein P8 family. In terms of assembly, homotrimer. Homomultimer. Interacts with host peroxisomal glycolate oxidase (GOX). This interaction mediates its relocation to virus factories peripheral to host peroxisomes.

It localises to the virion. The protein resides in the host cytoplasm. Functionally, capsid protein which self-assembles to form the outer icosahedral capsid with a T=13 symmetry, about 70 nm in diameter and consisting of 780 molecules capsid proteins. This is Outer capsid protein P8 from Alopecurus aequalis (Barnyard grass).